Consider the following 421-residue polypeptide: Probable mitochondrial chaperone BCS1-A (421 aa).

The Mitochondrial intermembrane portion of the chain corresponds to 1-10 (MNHLKDQSKS). Residues 11–31 (IVLGISSGIGIFLISGGINIF) traverse the membrane as a helical segment. The Mitochondrial matrix segment spans residues 32–421 (KNVGQYILNR…VQSITPFNLN (390 aa)). Position 228–235 (228–235 (GEPGNGKS)) interacts with ATP.

Belongs to the AAA ATPase family. BCS1 subfamily.

The protein localises to the mitochondrion inner membrane. The catalysed reaction is ATP + H2O = ADP + phosphate + H(+). In terms of biological role, chaperone necessary for the assembly of mitochondrial respiratory chain complex III. In Dictyostelium discoideum (Social amoeba), this protein is Probable mitochondrial chaperone BCS1-A (bcs1la).